The chain runs to 426 residues: Histidine--tRNA ligase (426 aa).

Belongs to the class-II aminoacyl-tRNA synthetase family. In terms of assembly, homodimer.

It is found in the cytoplasm. The catalysed reaction is tRNA(His) + L-histidine + ATP = L-histidyl-tRNA(His) + AMP + diphosphate + H(+). The protein is Histidine--tRNA ligase of Streptococcus thermophilus (strain CNRZ 1066).